Reading from the N-terminus, the 1684-residue chain is A-kinase anchor protein 12 (1684 aa).

A disordered region spans residues 1 to 124 (MGAGSSTEQR…DITKDEQEET (124 aa)). Glycine 2 carries N-myristoyl glycine lipidation. Phosphoserine is present on residues serine 11, serine 18, serine 22, and serine 27. A compositionally biased stretch (low complexity) spans 30-48 (GPAAEASGAAGDPADADPA). The span at 75-86 (ESQDGQEEEVTV) shows a compositional bias: acidic residues. The segment covering 89–105 (VGQRESEDVKEKDRAKE) has biased composition (basic and acidic residues). Serine 136 carries the phosphoserine modification. Disordered stretches follow at residues 175 to 281 (SDTV…ETTS) and 296 to 353 (KKTS…SADY). Basic and acidic residues predominate over residues 212–227 (ASKESELKQSTEKQEG). The span at 228 to 247 (TLKQAQSSTEIPLQAESGQG) shows a compositional bias: polar residues. Phosphoserine is present on residues serine 234 and serine 244. Positions 251–266 (EAAKDGEENREKEPTK) are enriched in basic and acidic residues. The segment at 253-543 (AKDGEENREK…QHIQTESPES (291 aa)) is involved in PKC-binding. Phosphoserine occurs at positions 270 and 273. Polar residues predominate over residues 270-281 (SPTSPVSNETTS). Residues 302-320 (KPKEDDLETSEKRKEQEAE) are compositionally biased toward basic and acidic residues. The segment covering 321–342 (KVDEEEGEKTEPAPAEEQEPAE) has biased composition (acidic residues). Residue threonine 330 is modified to Phosphothreonine. Serine 350 carries the phosphoserine modification. The residue at position 353 (tyrosine 353) is a Phosphotyrosine. 2 positions are modified to phosphoserine: serine 371 and serine 467. Residues 421 to 479 (GSGESLPPEKLAETQEVPQEAEPVEELMKTKEVCVSGGDHTQLTDLSPEEKMLPKHPEG) are disordered. The span at 468–478 (PEEKMLPKHPE) shows a compositional bias: basic and acidic residues. Serine 489, serine 505, and serine 507 each carry phosphoserine. The interval 492–825 (RIKVQGSPLK…INEDDPDVPA (334 aa)) is disordered. Residues 497–511 (GSPLKKLFSSSGLKK) show a composition bias toward low complexity. Residues 512 to 521 (LSGKKQKGKR) are compositionally biased toward basic residues. Phosphoserine occurs at positions 540, 543, 584, 598, 613, and 615. Positions 593-613 (ITPWASFKKMVTPKKRVRRPS) match the AKAP CaM-binding 1 motif. Over residues 611–625 (RPSESDKEEELDKVK) the composition is skewed to basic and acidic residues. The segment covering 626 to 637 (SATLSSTESTAS) has biased composition (low complexity). Threonine 628 bears the Phosphothreonine mark. Phosphoserine is present on residues serine 630, serine 631, serine 634, and serine 637. The segment covering 641-660 (DEVRAVGEEQRSEEPKRRVD) has biased composition (basic and acidic residues). Phosphoserine is present on residues serine 682, serine 683, and serine 684. Over residues 696-710 (DGHRAEEASKDKEAD) the composition is skewed to basic and acidic residues. Residues 714-723 (ASTQEQDQAH) are compositionally biased toward polar residues. Over residues 724–741 (GSSSPEPAGSPSEGEGVS) the composition is skewed to low complexity. Residues serine 733, serine 745, serine 767, and serine 786 each carry the phosphoserine modification. Residues 740 to 760 (VSTWESFKRLVTPRKKSKSKL) carry the AKAP CaM-binding 2 motif. Positions 781–801 (EESWVSIKKFIPGRRKKRADG) match the AKAP CaM-binding 3 motif. A Phosphothreonine modification is found at threonine 871. Serine 873 carries the phosphoserine modification. The interval 970–1001 (TEASGAEETTDMVSAVSQLSDSPDTTEEATPV) is disordered. A compositionally biased stretch (polar residues) spans 980–992 (DMVSAVSQLSDSP). A Glycyl lysine isopeptide (Lys-Gly) (interchain with G-Cter in SUMO1) cross-link involves residue lysine 1030. 4 disordered regions span residues 1055-1106 (VEED…VTED), 1121-1211 (LMEQ…DVLE), 1232-1365 (EGEA…DKAD), and 1391-1492 (TVAT…REKI). A Phosphoserine modification is found at serine 1059. Residues 1130-1176 (SSETLTDSETNGSTPLADSDTPNGTQQDETVDSQDSNAIAAVKQSQV) show a composition bias toward polar residues. Composition is skewed to basic and acidic residues over residues 1198-1210 (QEEH…RDVL) and 1239-1254 (DGEK…ELEV). The residue at position 1292 (serine 1292) is a Phosphoserine. Over residues 1293 to 1331 (PEKREMGTDVEKEETETKTEQASEEHEQETAAPEHEGTH) the composition is skewed to basic and acidic residues. Serine 1351, serine 1355, and serine 1357 each carry phosphoserine. The segment covering 1467-1492 (QRSDEDNKPDAGPDAAGKESAAREKI) has biased composition (basic and acidic residues). The tract at residues 1501-1514 (ELESKSNKIVQSVI) is RII-binding. Residues serine 1546 and serine 1645 each carry the phosphoserine modification. The disordered stretch occupies residues 1568-1684 (TLSAVAQEGL…QEPKGDLTES (117 aa)). Basic and acidic residues predominate over residues 1653–1684 (LTEEGDALKEEMNKAQTEEDDLQEPKGDLTES).

As to quaternary structure, binds to dimeric RII-alpha regulatory subunit of PKC. As to expression, isoform 1 is predominantly found in the nervous system. Isoform 3 is testis specific.

It is found in the cytoplasm. The protein localises to the cytoskeleton. Its subcellular location is the membrane. Its function is as follows. Anchoring protein that mediates the subcellular compartmentation of protein kinase A (PKA) and protein kinase C (PKC). In Mus musculus (Mouse), this protein is A-kinase anchor protein 12 (Akap12).